A 729-amino-acid chain; its full sequence is Fatty acid oxidation complex subunit alpha (729 aa).

The segment at 1–189 (MLYQSETLQL…KVGLVDAVVA (189 aa)) is enoyl-CoA hydratase/isomerase. Asp-296 serves as a coordination point for substrate. The interval 311–729 (SAPKQAAVLG…LLDVSISQPA (419 aa)) is 3-hydroxyacyl-CoA dehydrogenase. Residues Met-324, Asp-343, 400–402 (VVE), Lys-407, and Ser-429 each bind NAD(+). The active-site For 3-hydroxyacyl-CoA dehydrogenase activity is His-450. Asn-453 provides a ligand contact to NAD(+). Substrate contacts are provided by Asn-500 and Tyr-660.

The protein in the N-terminal section; belongs to the enoyl-CoA hydratase/isomerase family. This sequence in the C-terminal section; belongs to the 3-hydroxyacyl-CoA dehydrogenase family. Heterotetramer of two alpha chains (FadB) and two beta chains (FadA).

It carries out the reaction a (3S)-3-hydroxyacyl-CoA + NAD(+) = a 3-oxoacyl-CoA + NADH + H(+). The enzyme catalyses a (3S)-3-hydroxyacyl-CoA = a (2E)-enoyl-CoA + H2O. It catalyses the reaction a 4-saturated-(3S)-3-hydroxyacyl-CoA = a (3E)-enoyl-CoA + H2O. The catalysed reaction is (3S)-3-hydroxybutanoyl-CoA = (3R)-3-hydroxybutanoyl-CoA. It carries out the reaction a (3Z)-enoyl-CoA = a 4-saturated (2E)-enoyl-CoA. The enzyme catalyses a (3E)-enoyl-CoA = a 4-saturated (2E)-enoyl-CoA. It functions in the pathway lipid metabolism; fatty acid beta-oxidation. Involved in the aerobic and anaerobic degradation of long-chain fatty acids via beta-oxidation cycle. Catalyzes the formation of 3-oxoacyl-CoA from enoyl-CoA via L-3-hydroxyacyl-CoA. It can also use D-3-hydroxyacyl-CoA and cis-3-enoyl-CoA as substrate. This Yersinia enterocolitica serotype O:8 / biotype 1B (strain NCTC 13174 / 8081) protein is Fatty acid oxidation complex subunit alpha.